The following is a 357-amino-acid chain: UDP-N-acetylglucosamine--N-acetylmuramyl-(pentapeptide) pyrophosphoryl-undecaprenol N-acetylglucosamine transferase (357 aa).

R166, S196, and Q290 together coordinate UDP-N-acetyl-alpha-D-glucosamine.

Belongs to the glycosyltransferase 28 family. MurG subfamily.

It is found in the cell membrane. It catalyses the reaction Mur2Ac(oyl-L-Ala-gamma-D-Glu-L-Lys-D-Ala-D-Ala)-di-trans,octa-cis-undecaprenyl diphosphate + UDP-N-acetyl-alpha-D-glucosamine = beta-D-GlcNAc-(1-&gt;4)-Mur2Ac(oyl-L-Ala-gamma-D-Glu-L-Lys-D-Ala-D-Ala)-di-trans,octa-cis-undecaprenyl diphosphate + UDP + H(+). The protein operates within cell wall biogenesis; peptidoglycan biosynthesis. Cell wall formation. Catalyzes the transfer of a GlcNAc subunit on undecaprenyl-pyrophosphoryl-MurNAc-pentapeptide (lipid intermediate I) to form undecaprenyl-pyrophosphoryl-MurNAc-(pentapeptide)GlcNAc (lipid intermediate II). The polypeptide is UDP-N-acetylglucosamine--N-acetylmuramyl-(pentapeptide) pyrophosphoryl-undecaprenol N-acetylglucosamine transferase (Staphylococcus epidermidis (strain ATCC 35984 / DSM 28319 / BCRC 17069 / CCUG 31568 / BM 3577 / RP62A)).